A 337-amino-acid chain; its full sequence is Anthranilate phosphoribosyltransferase (337 aa).

5-phospho-alpha-D-ribose 1-diphosphate contacts are provided by residues Gly80, 83-84 (GD), Thr88, 90-93 (NIST), 108-116 (KHGNRAVSS), and Ser120. Gly80 provides a ligand contact to anthranilate. Position 92 (Ser92) interacts with Mg(2+). Residue Asn111 participates in anthranilate binding. Arg166 provides a ligand contact to anthranilate. Residues Asp224 and Glu225 each contribute to the Mg(2+) site.

This sequence belongs to the anthranilate phosphoribosyltransferase family. As to quaternary structure, homodimer. Mg(2+) is required as a cofactor.

The catalysed reaction is N-(5-phospho-beta-D-ribosyl)anthranilate + diphosphate = 5-phospho-alpha-D-ribose 1-diphosphate + anthranilate. Its pathway is amino-acid biosynthesis; L-tryptophan biosynthesis; L-tryptophan from chorismate: step 2/5. Its function is as follows. Catalyzes the transfer of the phosphoribosyl group of 5-phosphorylribose-1-pyrophosphate (PRPP) to anthranilate to yield N-(5'-phosphoribosyl)-anthranilate (PRA). The sequence is that of Anthranilate phosphoribosyltransferase from Anaeromyxobacter dehalogenans (strain 2CP-1 / ATCC BAA-258).